We begin with the raw amino-acid sequence, 357 residues long: Peptide chain release factor 1 (357 aa).

Gln-236 is subject to N5-methylglutamine. A compositionally biased stretch (basic and acidic residues) spans 284–293 (RRKKDQERAN). The segment at 284-313 (RRKKDQERANNRRKQIGSGDRSERIRTYNF) is disordered.

This sequence belongs to the prokaryotic/mitochondrial release factor family. Methylated by PrmC. Methylation increases the termination efficiency of RF1.

It localises to the cytoplasm. Its function is as follows. Peptide chain release factor 1 directs the termination of translation in response to the peptide chain termination codons UAG and UAA. This chain is Peptide chain release factor 1, found in Rickettsia bellii (strain RML369-C).